We begin with the raw amino-acid sequence, 309 residues long: D-alanine--D-alanine ligase (309 aa).

Residues 104 to 306 (KLLWQSFNLP…YQILVQKILE (203 aa)) enclose the ATP-grasp domain. 137 to 192 (ISLLGLPIIVKPNQEGSSIGITIVYSYETLYKACKTAFIFDNSILIEKFIYGEEYT) is a binding site for ATP. The Mg(2+) site is built by D260, E273, and N275.

Belongs to the D-alanine--D-alanine ligase family. Mg(2+) serves as cofactor. It depends on Mn(2+) as a cofactor.

Its subcellular location is the cytoplasm. It carries out the reaction 2 D-alanine + ATP = D-alanyl-D-alanine + ADP + phosphate + H(+). It participates in cell wall biogenesis; peptidoglycan biosynthesis. In terms of biological role, cell wall formation. The sequence is that of D-alanine--D-alanine ligase from Buchnera aphidicola subsp. Baizongia pistaciae (strain Bp).